The primary structure comprises 267 residues: Outer membrane protein assembly factor BamD (267 aa).

Residues 1-16 (MKKILLTVSLGLALSA) form the signal peptide. The N-palmitoyl cysteine moiety is linked to residue Cys17. Cys17 is lipidated: S-diacylglycerol cysteine.

The protein belongs to the BamD family. As to quaternary structure, part of the Bam complex.

The protein resides in the cell outer membrane. In terms of biological role, part of the outer membrane protein assembly complex, which is involved in assembly and insertion of beta-barrel proteins into the outer membrane. Required for efficient transformation of Neisseria meningitidis by species-related DNA. The polypeptide is Outer membrane protein assembly factor BamD (Neisseria meningitidis serogroup A / serotype 4A (strain DSM 15465 / Z2491)).